The following is a 317-amino-acid chain: Ornithine carbamoyltransferase (317 aa).

Carbamoyl phosphate-binding positions include 54 to 57 (STRT), Gln81, Arg105, and 132 to 135 (HPCQ). Residues Asn163, Asp227, and 231–232 (SM) contribute to the L-ornithine site. Carbamoyl phosphate is bound by residues 267–268 (CL) and Arg295.

Belongs to the aspartate/ornithine carbamoyltransferase superfamily. OTCase family.

The protein resides in the cytoplasm. The enzyme catalyses carbamoyl phosphate + L-ornithine = L-citrulline + phosphate + H(+). Its pathway is amino-acid biosynthesis; L-arginine biosynthesis; L-arginine from L-ornithine and carbamoyl phosphate: step 1/3. Reversibly catalyzes the transfer of the carbamoyl group from carbamoyl phosphate (CP) to the N(epsilon) atom of ornithine (ORN) to produce L-citrulline. This Parafrankia sp. (strain EAN1pec) protein is Ornithine carbamoyltransferase.